We begin with the raw amino-acid sequence, 128 residues long: Ribonuclease P protein component (128 aa).

This sequence belongs to the RnpA family. In terms of assembly, consists of a catalytic RNA component (M1 or rnpB) and a protein subunit.

The catalysed reaction is Endonucleolytic cleavage of RNA, removing 5'-extranucleotides from tRNA precursor.. RNaseP catalyzes the removal of the 5'-leader sequence from pre-tRNA to produce the mature 5'-terminus. It can also cleave other RNA substrates such as 4.5S RNA. The protein component plays an auxiliary but essential role in vivo by binding to the 5'-leader sequence and broadening the substrate specificity of the ribozyme. In Prochlorococcus marinus (strain MIT 9215), this protein is Ribonuclease P protein component.